The primary structure comprises 464 residues: Molybdate transporter 2 (464 aa).

Residues 8-9 carry the Tonoplast targeting signal motif; that stretch reads LL. Helical transmembrane passes span 33-53, 62-82, 116-136, 172-192, 223-243, 309-329, 348-368, 374-394, and 404-424; these read LSGA…LTLV, LIFT…PMPV, LLLG…LPVV, IWLG…IILS, LLSS…LCFI, VSIS…MPVC, SVIF…NSFV, FPIG…AMAS, and FIML…LGFG.

It belongs to the SLC26A/SulP transporter (TC 2.A.53) family. In terms of tissue distribution, expressed in leaves. Not detected in roots, shoots and seeds.

It is found in the vacuole membrane. Functionally, molybdate transporter required for vacuolar molybdate export during senescence. The polypeptide is Molybdate transporter 2 (MOT2) (Arabidopsis thaliana (Mouse-ear cress)).